A 557-amino-acid polypeptide reads, in one-letter code: Potassium-transporting ATPase potassium-binding subunit (557 aa).

The next 12 membrane-spanning stretches (helical) occupy residues 5–25 (GFLL…PLGS), 63–83 (LSAI…MLLG), 132–152 (GLTV…FALI), 170–190 (LLRI…LFFI), 253–273 (FVQM…FGEV), 283–303 (LLWA…WAEV), 329–349 (VLVS…AVIA), 356–376 (ALGG…FGGV), 379–399 (GLYG…LMIG), 416–436 (LTAL…ALAM), 484–504 (LLAL…MAIA), and 526–546 (LFVG…FIPA).

Belongs to the KdpA family. The system is composed of three essential subunits: KdpA, KdpB and KdpC.

The protein resides in the cell inner membrane. Functionally, part of the high-affinity ATP-driven potassium transport (or Kdp) system, which catalyzes the hydrolysis of ATP coupled with the electrogenic transport of potassium into the cytoplasm. This subunit binds the periplasmic potassium ions and delivers the ions to the membrane domain of KdpB through an intramembrane tunnel. The sequence is that of Potassium-transporting ATPase potassium-binding subunit from Escherichia coli O127:H6 (strain E2348/69 / EPEC).